We begin with the raw amino-acid sequence, 178 residues long: NADPH azoreductase (178 aa).

Position 106–111 (106–111 (GGGKGG)) interacts with NADP(+).

The protein belongs to the azoreductase type 2 family. As to quaternary structure, monomer.

The catalysed reaction is N,N-dimethyl-1,4-phenylenediamine + aniline + 2 NADP(+) = 4-(dimethylamino)azobenzene + 2 NADPH + 2 H(+). Its function is as follows. Catalyzes the reductive cleavage of azo bond in aromatic azo compounds to the corresponding amines. Requires NADPH as an electron donor for its activity. Compounds with paired naphthalene groups coupled with the azo group are good substrates, with the following preference order: Rocceline &gt; Sumifix Black B &gt; Solar Orange. The sequence is that of NADPH azoreductase (azr) from Bacillus sp. (strain OY1-2).